We begin with the raw amino-acid sequence, 241 residues long: 3-deoxy-D-manno-octulosonic acid kinase (241 aa).

D171 is an active-site residue.

It belongs to the protein kinase superfamily. KdkA/RfaP family.

It localises to the cell inner membrane. The catalysed reaction is an alpha-Kdo-(2-&gt;6)-lipid IVA + ATP = a 4-O-phospho-alpha-Kdo-(2-&gt;6)-lipid IVA + ADP + H(+). The protein operates within bacterial outer membrane biogenesis; LPS core biosynthesis. Functionally, catalyzes the ATP-dependent phosphorylation of the 3-deoxy-D-manno-octulosonic acid (Kdo) residue in Kdo-lipid IV(A) at the 4-OH position. The sequence is that of 3-deoxy-D-manno-octulosonic acid kinase from Haemophilus influenzae (strain 86-028NP).